Reading from the N-terminus, the 526-residue chain is Glutamyl-tRNA(Gln) amidotransferase subunit A, mitochondrial (526 aa).

Catalysis depends on charge relay system residues Lys-76 and Ser-171. Residue Ser-195 is the Acyl-ester intermediate of the active site.

It belongs to the amidase family. GatA subfamily. As to quaternary structure, subunit of the heterotrimeric GatCAB amidotransferase (AdT) complex, composed of A (QRSL1), B (GATB) and C (GATC) subunits.

The protein localises to the mitochondrion. It catalyses the reaction L-glutamyl-tRNA(Gln) + L-glutamine + ATP + H2O = L-glutaminyl-tRNA(Gln) + L-glutamate + ADP + phosphate + H(+). Functionally, allows the formation of correctly charged Gln-tRNA(Gln) through the transamidation of misacylated Glu-tRNA(Gln) in the mitochondria. The reaction takes place in the presence of glutamine and ATP through an activated gamma-phospho-Glu-tRNA(Gln). This chain is Glutamyl-tRNA(Gln) amidotransferase subunit A, mitochondrial, found in Canis lupus familiaris (Dog).